A 117-amino-acid chain; its full sequence is MARVKRGVIARARHKKVLKAAKGYYGARSRVYRVAFQAVIKAGQYAYRDRRQRKRQFRQLWIARINAAARQNGLSYSKFINGLKKASVEIDRKILADIAVFDKVAFTALVEKAKSAL.

Belongs to the bacterial ribosomal protein bL20 family.

Functionally, binds directly to 23S ribosomal RNA and is necessary for the in vitro assembly process of the 50S ribosomal subunit. It is not involved in the protein synthesizing functions of that subunit. This Pasteurella multocida (strain Pm70) protein is Large ribosomal subunit protein bL20.